The chain runs to 157 residues: ATP synthase subunit delta (157 aa).

It belongs to the ATPase delta chain family. In terms of assembly, F-type ATPases have 2 components, F(1) - the catalytic core - and F(0) - the membrane proton channel. F(1) has five subunits: alpha(3), beta(3), gamma(1), delta(1), epsilon(1). F(0) has three main subunits: a(1), b(2) and c(10-14). The alpha and beta chains form an alternating ring which encloses part of the gamma chain. F(1) is attached to F(0) by a central stalk formed by the gamma and epsilon chains, while a peripheral stalk is formed by the delta and b chains.

It localises to the cell membrane. In terms of biological role, f(1)F(0) ATP synthase produces ATP from ADP in the presence of a proton or sodium gradient. F-type ATPases consist of two structural domains, F(1) containing the extramembraneous catalytic core and F(0) containing the membrane proton channel, linked together by a central stalk and a peripheral stalk. During catalysis, ATP synthesis in the catalytic domain of F(1) is coupled via a rotary mechanism of the central stalk subunits to proton translocation. Its function is as follows. This protein is part of the stalk that links CF(0) to CF(1). It either transmits conformational changes from CF(0) to CF(1) or is implicated in proton conduction. This chain is ATP synthase subunit delta, found in Chloroflexus aurantiacus (strain ATCC 29364 / DSM 637 / Y-400-fl).